We begin with the raw amino-acid sequence, 92 residues long: Small ribosomal subunit protein bS20 (92 aa).

It belongs to the bacterial ribosomal protein bS20 family.

Binds directly to 16S ribosomal RNA. This Methylacidiphilum infernorum (isolate V4) (Methylokorus infernorum (strain V4)) protein is Small ribosomal subunit protein bS20.